The chain runs to 308 residues: tRNA uridine(34) hydroxylase (308 aa).

The region spanning 129-223 (QEKDTLILDA…YGKHPETQGA (95 aa)) is the Rhodanese domain. C183 (cysteine persulfide intermediate) is an active-site residue.

Belongs to the TrhO family.

It catalyses the reaction uridine(34) in tRNA + AH2 + O2 = 5-hydroxyuridine(34) in tRNA + A + H2O. Functionally, catalyzes oxygen-dependent 5-hydroxyuridine (ho5U) modification at position 34 in tRNAs. The chain is tRNA uridine(34) hydroxylase from Onion yellows phytoplasma (strain OY-M).